A 192-amino-acid polypeptide reads, in one-letter code: Peptidyl-tRNA hydrolase (192 aa).

Residue Tyr16 participates in tRNA binding. Catalysis depends on His21, which acts as the Proton acceptor. TRNA is bound by residues Tyr66 and Asn68.

This sequence belongs to the PTH family. In terms of assembly, monomer.

Its subcellular location is the cytoplasm. It catalyses the reaction an N-acyl-L-alpha-aminoacyl-tRNA + H2O = an N-acyl-L-amino acid + a tRNA + H(+). In terms of biological role, hydrolyzes ribosome-free peptidyl-tRNAs (with 1 or more amino acids incorporated), which drop off the ribosome during protein synthesis, or as a result of ribosome stalling. Catalyzes the release of premature peptidyl moieties from peptidyl-tRNA molecules trapped in stalled 50S ribosomal subunits, and thus maintains levels of free tRNAs and 50S ribosomes. In Aquifex aeolicus (strain VF5), this protein is Peptidyl-tRNA hydrolase.